We begin with the raw amino-acid sequence, 518 residues long: Beta-TrCP (518 aa).

Polar residues predominate over residues 1-12; it reads MEGFSCSLQPPT. The segment at 1–24 is disordered; sequence MEGFSCSLQPPTASEREDCNRDEP. Residues 14 to 24 are compositionally biased toward basic and acidic residues; it reads SEREDCNRDEP. The region spanning 119–157 is the F-box domain; sequence DHIAENILSYLDAKSLCSAELVCKEWYRVTSDGMLWKKL. WD repeat units follow at residues 230–258, 270–298, 310–338, 353–381, 393–421, 433–461, and 482–510; these read ETSK…KIWD, GHTG…RVWD, HHCE…AVWD, GHRA…KVWN, GHKR…RLWD, GHEE…KVWD, and EHSG…LIWD.

Part of a SCF (SKP1-cullin-F-box) ubiquitin-protein ligase complex. Interacts with fbxo5.

In terms of biological role, substrate recognition component of a SCF (SKP1-CUL1-F-box protein) E3 ubiquitin-protein ligase complex which mediates the ubiquitination and subsequent proteasomal degradation of target proteins. Probably recognizes and binds to phosphorylated target proteins. May participate in Wnt signaling. The polypeptide is Beta-TrCP (fbxw1) (Xenopus laevis (African clawed frog)).